The sequence spans 51 residues: MRIQSTVNGGFAEVSDEYAQRLIAAGGWKRPRKPRTTKPKPAPKQEPATEE.

The interval 24 to 51 is disordered; it reads AAGGWKRPRKPRTTKPKPAPKQEPATEE. Residues 29–38 show a composition bias toward basic residues; the sequence is KRPRKPRTTK.

The polypeptide is Gene 18 protein (18) (Mycobacterium phage D29 (Mycobacteriophage D29)).